The sequence spans 95 residues: Acylphosphatase (95 aa).

The 87-residue stretch at Thr-7–Pro-93 folds into the Acylphosphatase-like domain. Active-site residues include Arg-22 and Asn-40.

Belongs to the acylphosphatase family.

It catalyses the reaction an acyl phosphate + H2O = a carboxylate + phosphate + H(+). In Cupriavidus metallidurans (strain ATCC 43123 / DSM 2839 / NBRC 102507 / CH34) (Ralstonia metallidurans), this protein is Acylphosphatase (acyP).